The primary structure comprises 498 residues: ATP synthase subunit beta, chloroplastic (498 aa).

An ATP-binding site is contributed by 172–179 (GGAGVGKT).

This sequence belongs to the ATPase alpha/beta chains family. As to quaternary structure, F-type ATPases have 2 components, CF(1) - the catalytic core - and CF(0) - the membrane proton channel. CF(1) has five subunits: alpha(3), beta(3), gamma(1), delta(1), epsilon(1). CF(0) has four main subunits: a(1), b(1), b'(1) and c(9-12).

It is found in the plastid. The protein resides in the chloroplast thylakoid membrane. It catalyses the reaction ATP + H2O + 4 H(+)(in) = ADP + phosphate + 5 H(+)(out). Functionally, produces ATP from ADP in the presence of a proton gradient across the membrane. The catalytic sites are hosted primarily by the beta subunits. The polypeptide is ATP synthase subunit beta, chloroplastic (Vitis vinifera (Grape)).